The following is a 100-amino-acid chain: Urease subunit gamma (100 aa).

The protein belongs to the urease gamma subunit family. In terms of assembly, heterotrimer of UreA (gamma), UreB (beta) and UreC (alpha) subunits. Three heterotrimers associate to form the active enzyme.

The protein resides in the cytoplasm. The enzyme catalyses urea + 2 H2O + H(+) = hydrogencarbonate + 2 NH4(+). It functions in the pathway nitrogen metabolism; urea degradation; CO(2) and NH(3) from urea (urease route): step 1/1. This chain is Urease subunit gamma, found in Thioalkalivibrio sulfidiphilus (strain HL-EbGR7).